A 239-amino-acid chain; its full sequence is MICOS complex subunit mic25a (239 aa).

The N-myristoyl glycine moiety is linked to residue Gly2. Disordered stretches follow at residues 27-88 (VKLS…KKRY) and 113-133 (DISR…ERAK). Polar residues predominate over residues 50-78 (NKENQGHQTRTPSTSDAQAPKTQAKTTFP). Over residues 79-88 (DSKEELKKRY) the composition is skewed to basic and acidic residues. Positions 79–166 (DSKEELKKRY…ITQLEKKNEE (88 aa)) form a coiled coil. The CHCH domain occupies 192–234 (EPVCLNLQAQILNCYRENREQTLQCSDLAKEYMQCINAAKKNL). 2 short sequence motifs (cx9C motif) span residues 195–205 (CLNLQAQILNC) and 216–226 (CSDLAKEYMQC). Cystine bridges form between Cys195-Cys226 and Cys205-Cys216.

This sequence belongs to the MICOS complex subunit Mic19 family. Metazoan Mic25 subfamily. Component of the mitochondrial contact site and cristae organizing system (MICOS) complex (also known as MINOS or MitOS complex).

It localises to the mitochondrion inner membrane. Functionally, component of the MICOS complex, a large protein complex of the mitochondrial inner membrane that plays crucial roles in the maintenance of crista junctions, inner membrane architecture, and formation of contact sites to the outer membrane. The polypeptide is MICOS complex subunit mic25a (chchd6a) (Danio rerio (Zebrafish)).